A 999-amino-acid polypeptide reads, in one-letter code: MEEAHLLSAADVLRRFSVTAEGGLTLEQVTDARERYGPNELPTEEGKSLWELVVEQFEDLLVRILLLAALVSFVLAWFEEGEETTTAFVEPLVIMLILVANAIVGVWQERNAESAIEALKEYEPEMGKVIRSDRKGVQRIRARDIVPGDIVEVAVGDKVPADLRLIEIKSTTLRVDQSILTGESVSVTKHTDAIPDPRAVNQDKKNMLFSGTNIASGKALGVAVATGLHTELGKIRSQMAAVEPERTPLQRKLDEFGRQLSHAISVICVAVWVINIGHFADPAHGGSWLRGAVYYFKIAVALAVAAIPEGLPAVITTCLALGTRRMARKNAIVRSLPSVETLGCTSVICSDKTGTLTTNQMSVCRMFVVAEAEAGACRLHEFTISGTTYTPEGEVRQGEQLVRCGQFDGLVELATICALCNDSALDYNEAKGVYEKVGEATETALTCLVEKMNVFDTDLKGLSRVERAGACNSVIKQLMQKEFTLEFSRDRKSMSVYCTPTRADPKAQGSKMFVKGAPESVIERCSSVRVGSRTVPLSATSREHILAKIRDWGSGSHTLRCLALATRDTPPRKEDMQLDDCSQFVQYETGLTFVGCVGMLDPPRPEVAACITRCSRAGIRVVMITGDNKGTAVAICRRLGIFGDTEDVLGKAYTGREFDDLSPEQQRQACRTARCFARVEPAHKSRIVENLQSFNEITAMTGDGVNDAPALKKAEIGIAMGSGTAVAKSAAEMVLSDDNFASIVAAVEEGRAIYNNMKQFIRYLISSNVGEVVCIFLTAILGLPEALIPVQLLWVNLVTDGLPATALGFNPPDLDIMEKLPRNPREALISGWLFFRYLAIGVYVGLATVAAATWWFLYDAEGPQVTFHQLRNFLKCSEDNPLFAGIDCEVFESRFPTTMALSVLVTIEMCNALNSVSENQSLLRMPPWLNPWLLGAVVMSMALHFLILLVPPLPLIFQVTPLSGRQWGVVLQMSLPVILLDEALKYLSRHHVDEKKDLK.

Position 1 is an N-acetylmethionine (Met-1). Over 1 to 48 the chain is Cytoplasmic; sequence MEEAHLLSAADVLRRFSVTAEGGLTLEQVTDARERYGPNELPTEEGKS. At Ser-17 the chain carries Phosphoserine. Thr-19 is modified (phosphothreonine). Residues 49 to 69 traverse the membrane as a helical segment; the sequence is LWELVVEQFEDLLVRILLLAA. The Lumenal portion of the chain corresponds to 70-89; the sequence is LVSFVLAWFEEGEETTTAFV. A helical membrane pass occupies residues 90-110; it reads EPLVIMLILVANAIVGVWQER. The Cytoplasmic segment spans residues 111–253; it reads NAESAIEALK…PERTPLQRKL (143 aa). The helical transmembrane segment at 254–273 threads the bilayer; the sequence is DEFGRQLSHAISVICVAVWV. Over 274 to 295 the chain is Lumenal; it reads INIGHFADPAHGGSWLRGAVYY. A helical transmembrane segment spans residues 296 to 313; sequence FKIAVALAVAAIPEGLPA. The Ca(2+) site is built by Val-304, Ala-305, Ile-307, and Glu-309. Residues 314-757 lie on the Cytoplasmic side of the membrane; it reads VITTCLALGT…EEGRAIYNNM (444 aa). The active-site 4-aspartylphosphate intermediate is the Asp-351. Residues Asp-351 and Thr-353 each contribute to the Mg(2+) site. Thr-353 contributes to the ATP binding site. Residues 370 to 400 form an interaction with phospholamban 1 region; it reads AEAEAGACRLHEFTISGTTYTPEGEVRQGEQ. Thr-415 is modified (phosphothreonine). ATP-binding residues include Glu-442, Arg-489, Lys-515, Arg-560, Thr-625, Gly-626, and Asp-627. Ser-662 carries the phosphoserine modification. Residues Arg-678 and Lys-684 each contribute to the ATP site. Asp-703 lines the Mg(2+) pocket. ATP is bound at residue Asn-706. The chain crosses the membrane as a helical span at residues 758 to 777; it reads KQFIRYLISSNVGEVVCIFL. Ca(2+) contacts are provided by Asn-768 and Glu-771. Over 778–787 the chain is Lumenal; it reads TAILGLPEAL. A helical transmembrane segment spans residues 788 to 808; sequence IPVQLLWVNLVTDGLPATALG. Residues 788-808 are interaction with phospholamban 2; sequence IPVQLLWVNLVTDGLPATALG. Ca(2+) contacts are provided by Asn-796, Thr-799, and Asp-800. At 809 to 828 the chain is on the cytoplasmic side; sequence FNPPDLDIMEKLPRNPREAL. A helical membrane pass occupies residues 829–851; sequence ISGWLFFRYLAIGVYVGLATVAA. The Lumenal portion of the chain corresponds to 852-897; that stretch reads ATWWFLYDAEGPQVTFHQLRNFLKCSEDNPLFAGIDCEVFESRFPT. A helical membrane pass occupies residues 898 to 917; that stretch reads TMALSVLVTIEMCNALNSVS. Glu-908 lines the Ca(2+) pocket. The Cytoplasmic portion of the chain corresponds to 918-930; that stretch reads ENQSLLRMPPWLN. A helical transmembrane segment spans residues 931–949; the sequence is PWLLGAVVMSMALHFLILL. The Lumenal segment spans residues 950 to 964; that stretch reads VPPLPLIFQVTPLSG. A helical transmembrane segment spans residues 965–985; that stretch reads RQWGVVLQMSLPVILLDEALK. Topologically, residues 986-999 are cytoplasmic; sequence YLSRHHVDEKKDLK.

This sequence belongs to the cation transport ATPase (P-type) (TC 3.A.3) family. Type IIA subfamily. Interacts with sarcolipin (SLN). Interacts with phospholamban (PLN). Interacts with myoregulin (MRLN). Interacts with DWORF. Interacts with VMP1. Interacts with TUNAR; the interaction occurs at low levels in low glucose conditions and is increased by high glucose levels. Requires Mg(2+) as cofactor. In terms of tissue distribution, found in most tissues. Most abundant in large and small intestine, spleen and lung. Also detected in PC12 cells.

It is found in the endoplasmic reticulum membrane. The protein localises to the sarcoplasmic reticulum membrane. It carries out the reaction Ca(2+)(in) + ATP + H2O = Ca(2+)(out) + ADP + phosphate + H(+). Inhibited by sarcolipin (SLN), phospholamban (PLN) and myoregulin (MRLN). Enhanced by DWORF; DWORF increases activity by displacing sarcolipin (SLN), phospholamban (PLN) and myoregulin (MRLN). Functionally, this magnesium-dependent enzyme catalyzes the hydrolysis of ATP coupled with the transport of the calcium. Transports calcium ions from the cytosol into the sarcoplasmic/endoplasmic reticulum lumen. Contributes to calcium sequestration involved in muscular excitation/contraction. In terms of biological role, this magnesium-dependent enzyme catalyzes the hydrolysis of ATP coupled with the transport of calcium. Transports calcium ions from the cytosol into the sarcoplasmic/endoplasmic reticulum lumen. Contributes to calcium sequestration involved in muscular excitation/contraction. This is Sarcoplasmic/endoplasmic reticulum calcium ATPase 3 (Atp2a3) from Rattus norvegicus (Rat).